Here is a 164-residue protein sequence, read N- to C-terminus: Cyclin-dependent kinase inhibitor 1 (164 aa).

S2 carries the post-translational modification N-acetylserine. S2 participates in a covalent cross-link: Glycyl serine ester (Ser-Gly) (interchain with G-Cter in ubiquitin). A C4-type zinc finger spans residues 13 to 41 (CGSKACRRLFGPVDSEQLSRDCDALMAGC). Residues 17–24 (ACRRLFGP) are required for binding cyclins. The interval 53-58 (FVTETP) is required for binding CDKs. The segment at 76–164 (LYLPTGPRRG…RRLIFSKRKP (89 aa)) is disordered. Position 80 is a phosphothreonine; by LKB1 (T80). S114 is modified (phosphoserine; by GSK3-beta). S130 carries the phosphoserine modification. Positions 140–164 (RKRRQTSMTDFYHSKRRLIFSKRKP) match the PIP-box K+4 motif motif. Positions 141-156 (KRRQTSMTDFYHSKRR) match the Nuclear localization signal motif. T145 carries the post-translational modification Phosphothreonine; by PKA, PKB/AKT1, PIM1 and PIM2. At S146 the chain carries Phosphoserine; by PKC and NUAK1. The segment at 152–164 (HSKRRLIFSKRKP) is interaction with TRIM39. The span at 153-164 (SKRRLIFSKRKP) shows a compositional bias: basic residues. S160 carries the post-translational modification Phosphoserine; by PKC; in vitro.

Belongs to the CDI family. Interacts with HDAC1; the interaction is prevented by competitive binding of C10orf90/FATS to HDAC1 facilitating acetylation and protein stabilization of CDKN1A/p21. Interacts with MKRN1. Interacts with PSMA3. Interacts with PCNA. Component of the ternary complex, cyclin D-CDK4-CDKN1A. Interacts (via its N-terminal domain) with CDK4; the interaction promotes the assembly of the cyclin D-CDK4 complex, its nuclear translocation and promotes the cyclin D-dependent enzyme activity of CDK4. Binding to CDK2 leads to CDK2/cyclin E inactivation at the G1-S phase DNA damage checkpoint, thereby arresting cells at the G1-S transition during DNA repair. Interacts with PIM1. Interacts with STK11 and NUAK1. Interacts wih DTL. Interacts with isoform 1 and isoform 2 of TRIM39. Interacts with PKP3; the interaction sequesters CDKN1A to the cytoplasm thereby repressing its role as an inhibitor of CDK4- and CDK6-driven RB1 phosphorylation. In terms of processing, phosphorylation of Thr-145 by Akt or of Ser-146 by PKC impairs binding to PCNA. Phosphorylation at Ser-114 by GSK3-beta enhances ubiquitination by the DCX(DTL) complex. Phosphorylation of Thr-145 by PIM2 enhances CDKN1A stability and inhibits cell proliferation. Phosphorylation of Thr-145 by PIM1 results in the relocation of CDKN1A to the cytoplasm and enhanced CDKN1A protein stability. UV radiation-induced phosphorylation at Thr-80 by LKB1 and at Ser-146 by NUAK1 leads to its degradation. Ubiquitinated by MKRN1; leading to polyubiquitination and 26S proteasome-dependent degradation. Ubiquitinated by the DCX(DTL) complex, also named CRL4(CDT2) complex, leading to its degradation during S phase or following UV irradiation. Ubiquitination by the DCX(DTL) complex is essential to control replication licensing and is PCNA-dependent: interacts with PCNA via its PIP-box, while the presence of the containing the 'K+4' motif in the PIP box, recruit the DCX(DTL) complex, leading to its degradation. Ubiquitination at Ser-2 leads to degradation by the proteasome pathway. Ubiquitinated by RNF114; leading to proteasomal degradation. Post-translationally, acetylation leads to protein stability. Acetylated in vitro on Lys-141, Lys-154, Lys-161 and Lys-163. Deacetylation by HDAC1 is prevented by competitive binding of C10orf90/FATS to HDAC1. As to expression, expressed in all adult tissues, with 5-fold lower levels observed in the brain.

The protein resides in the cytoplasm. The protein localises to the nucleus. Plays an important role in controlling cell cycle progression and DNA damage-induced G2 arrest. Involved in p53/TP53 mediated inhibition of cellular proliferation in response to DNA damage. Also involved in p53-independent DNA damage-induced G2 arrest mediated by CREB3L1 in astrocytes and osteoblasts. Binds to and inhibits cyclin-dependent kinase activity, preventing phosphorylation of critical cyclin-dependent kinase substrates and blocking cell cycle progression. Functions in the nuclear localization and assembly of cyclin D-CDK4 complex and promotes its kinase activity towards RB1. At higher stoichiometric ratios, inhibits the kinase activity of the cyclin D-CDK4 complex. Inhibits DNA synthesis by DNA polymerase delta by competing with POLD3 for PCNA binding. Negatively regulates the CDK4- and CDK6-driven phosphorylation of RB1 in keratinocytes, thereby resulting in the release of E2F1 and subsequent transcription of E2F1-driven G1/S phase promoting genes. This is Cyclin-dependent kinase inhibitor 1 from Homo sapiens (Human).